The following is a 606-amino-acid chain: Ubiquitin carboxyl-terminal hydrolase 2 (606 aa).

Residues 1–201 (MSQLSSTLKR…RSEYLADYLE (201 aa)) are necessary for interaction with MDM4. Disordered stretches follow at residues 53 to 112 (PSPP…GGSG) and 207 to 228 (ASAP…LSPT). Residues 90–100 (KRAESQTRGTE) are compositionally biased toward basic and acidic residues. The USP domain maps to 268–600 (AGLRNLGNTC…DAYLLFYELA (333 aa)). C277 serves as the catalytic Nucleophile. Positions 404-504 (YLEREDSRIG…FPKILVLHLK (101 aa)) are necessary for interaction with MDM4. C426, C429, C477, and C480 together coordinate Zn(2+). The Proton acceptor role is filled by H558.

This sequence belongs to the peptidase C19 family. USP2 subfamily. In terms of assembly, homooligomer. Found in trimeric complex with MDM2 and MDM4 and USP2. Interacts with CCND1; the interaction is direct and promotes its stabilization by antagonizing ubiquitin-dependent degradation. Interacts (via N-terminus and C-terminus) with MDM2. Interacts with MDM4 and PER1. Interacts with KCNQ1; counteracts the NEDD4L-specific down-regulation of I(Ks) and restores plasma membrane localization of KCNQ1.

Its subcellular location is the cytoplasm. It localises to the perinuclear region. The enzyme catalyses Thiol-dependent hydrolysis of ester, thioester, amide, peptide and isopeptide bonds formed by the C-terminal Gly of ubiquitin (a 76-residue protein attached to proteins as an intracellular targeting signal).. Cleavage is inhibited by ubiquitin in a dosage-dependent manner. Cleavage is blocked by ubiquitin aldehyde. Hydrolase that deubiquitinates polyubiquitinated target proteins such as MDM2, MDM4 and CCND1. Possesses both ubiquitin-specific peptidase and isopeptidase activities. Deubiquitinates MDM2 without reversing MDM2-mediated p53/TP53 ubiquitination and thus indirectly promotes p53/TP53 degradation and limits p53 activity. Has no deubiquitinase activity against p53/TP53. Prevents MDM2-mediated degradation of MDM4. Plays a role in the G1/S cell-cycle progression in normal and cancer cells. Plays a role in the regulation of myogenic differentiation of embryonic muscle cells. Regulates the circadian clock by modulating its intrinsic circadian rhythm and its capacity to respond to external cues. Associates with clock proteins and deubiquitinates core clock component PER1 but does not affect its overall stability. Regulates the nucleocytoplasmic shuttling and nuclear retention of PER1 and its repressive role on the clock transcription factors CLOCK and BMAL1. This is Ubiquitin carboxyl-terminal hydrolase 2 (USP2) from Bos taurus (Bovine).